Here is a 158-residue protein sequence, read N- to C-terminus: Cyclic pyranopterin monophosphate synthase (158 aa).

Substrate-binding positions include 75–77 (LCH) and 113–114 (ME). Residue aspartate 128 is part of the active site.

The protein belongs to the MoaC family. Homohexamer; trimer of dimers.

The catalysed reaction is (8S)-3',8-cyclo-7,8-dihydroguanosine 5'-triphosphate = cyclic pyranopterin phosphate + diphosphate. Its pathway is cofactor biosynthesis; molybdopterin biosynthesis. Functionally, catalyzes the conversion of (8S)-3',8-cyclo-7,8-dihydroguanosine 5'-triphosphate to cyclic pyranopterin monophosphate (cPMP). The sequence is that of Cyclic pyranopterin monophosphate synthase from Dinoroseobacter shibae (strain DSM 16493 / NCIMB 14021 / DFL 12).